Here is a 298-residue protein sequence, read N- to C-terminus: Proline-rich protein 32 (298 aa).

The tract at residues cysteine 36 to arginine 56 is disordered.

The polypeptide is Proline-rich protein 32 (PRR32) (Homo sapiens (Human)).